Reading from the N-terminus, the 258-residue chain is Imidazole glycerol phosphate synthase subunit HisF (258 aa).

Residues aspartate 11 and aspartate 130 contribute to the active site.

Belongs to the HisA/HisF family. As to quaternary structure, heterodimer of HisH and HisF.

Its subcellular location is the cytoplasm. The enzyme catalyses 5-[(5-phospho-1-deoxy-D-ribulos-1-ylimino)methylamino]-1-(5-phospho-beta-D-ribosyl)imidazole-4-carboxamide + L-glutamine = D-erythro-1-(imidazol-4-yl)glycerol 3-phosphate + 5-amino-1-(5-phospho-beta-D-ribosyl)imidazole-4-carboxamide + L-glutamate + H(+). The protein operates within amino-acid biosynthesis; L-histidine biosynthesis; L-histidine from 5-phospho-alpha-D-ribose 1-diphosphate: step 5/9. Its function is as follows. IGPS catalyzes the conversion of PRFAR and glutamine to IGP, AICAR and glutamate. The HisF subunit catalyzes the cyclization activity that produces IGP and AICAR from PRFAR using the ammonia provided by the HisH subunit. The protein is Imidazole glycerol phosphate synthase subunit HisF of Blochmanniella pennsylvanica (strain BPEN).